An 887-amino-acid chain; its full sequence is Phosphatidylinositol 3-kinase catalytic subunit type 3 (887 aa).

The C2 PI3K-type domain maps to 35–184 (YKAVLEDPML…LAKLTKAHRQ (150 aa)). Residues 149-170 (VEADGSEPTKTPGRTSSTLSED) form a disordered region. The span at 156–170 (PTKTPGRTSSTLSED) shows a compositional bias: polar residues. T163 is modified (phosphothreonine; by AMPK). Phosphoserine; by AMPK is present on S165. Phosphoserine occurs at positions 244, 261, and 282. One can recognise a PIK helical domain in the interval 283 to 520 (DHDLKPNAAT…PKTHEMYLNV (238 aa)). Positions 447–467 (TSPLPSVSSPPPASKTKEVPD) are disordered. Residues 605 to 871 (IPETATLFKS…LIDESVHALF (267 aa)) enclose the PI3K/PI4K catalytic domain. Residues 611–617 (LFKSALM) form a G-loop region. Positions 740–748 (GVGDRHLDN) are catalytic loop. An activation loop region spans residues 759 to 780 (HIDFGYILGRDPKPLPPPMKLN).

The protein belongs to the PI3/PI4-kinase family. As to quaternary structure, component of the PI3K (PI3KC3/PI3K-III/class III phosphatidylinositol 3-kinase) complex the core of which is composed of the catalytic subunit PIK3C3, the regulatory subunit PIK3R4 and BECN1 associating with additional regulatory/auxiliary subunits to form alternative complex forms. Alternative complex forms containing a fourth regulatory subunit in a mutually exclusive manner are: the PI3K complex I (PI3KC3-C1) containing ATG14, and the PI3K complex II (PI3KC3-C2) containing UVRAG. PI3KC3-C1 displays a V-shaped architecture with PIK3R4 serving as a bridge between PIK3C3 and the ATG14:BECN1 subcomplex. Both, PI3KC3-C1 and PI3KC3-C2, can associate with further regulatory subunits such as RUBCN, SH3GLB1/Bif-1 and AMBRA1. PI3KC3-C1 probably associates with PIK3CB. Interacts with RAB7A in the presence of PIK3R4. Interacts with AMBRA1. Interacts with BECN1P1/BECN2. Interacts with SLAMF1. May be a component of a complex composed of RAB5A (in GDP-bound form), DYN2 and PIK3C3. Interacts with NCKAP1L. Interacts with ATG14; this interaction is increased in the absence of TMEM39A. Interacts with STEEP1; the interaction is STING1-dependent and required for trafficking of STING1 from the endoplasmic reticulum. Interacts with YWHAG. Interacts with ARMC3. It depends on Mn(2+) as a cofactor. Post-translationally, ubiquitinated via 'Lys-29'- and 'Lys-48'-linked ubiquitination by UBE3C, promoting its degradation. Deubiquitination by ZRANB1/TRABID promotes its stabilization, leading to autophagosome maturation. As to expression, ubiquitously expressed, with a highest expression in skeletal muscle.

It localises to the midbody. Its subcellular location is the late endosome. It is found in the cytoplasmic vesicle. The protein localises to the autophagosome. It catalyses the reaction a 1,2-diacyl-sn-glycero-3-phospho-(1D-myo-inositol) + ATP = a 1,2-diacyl-sn-glycero-3-phospho-(1D-myo-inositol-3-phosphate) + ADP + H(+). Functionally, catalytic subunit of the PI3K complex that mediates formation of phosphatidylinositol 3-phosphate; different complex forms are believed to play a role in multiple membrane trafficking pathways: PI3KC3-C1 is involved in initiation of autophagosomes and PI3KC3-C2 in maturation of autophagosomes and endocytosis. As part of PI3KC3-C1, promotes endoplasmic reticulum membrane curvature formation prior to vesicle budding. Involved in regulation of degradative endocytic trafficking and required for the abscission step in cytokinesis, probably in the context of PI3KC3-C2. Involved in the transport of lysosomal enzyme precursors to lysosomes. Required for transport from early to late endosomes. (Microbial infection) Kinase activity is required for SARS coronavirus-2/SARS-CoV-2 replication. This is Phosphatidylinositol 3-kinase catalytic subunit type 3 from Homo sapiens (Human).